Here is a 223-residue protein sequence, read N- to C-terminus: MNQDQLKQAVAQAAVDHILPHLDSKSIVGVGTGSTANFFIDALARHKAEFDGAVASSEATAKRLKEHGIPVYELNTVSELEFYVDGADESNERLELIKGGGAALTREKIVAAVARTFICIADASKLVPILGQFPLPVEVIPMARSHVARQLVKLGGDPVYREGVLTDNGNIILDVHNLRIDSPVELEEKINAIVGVVTNGLFAARPADLLLLGTADGVQTLKA.

Residues 32–35 (TGST), 85–88 (DGAD), and 98–101 (KGGG) contribute to the substrate site. Glutamate 107 functions as the Proton acceptor in the catalytic mechanism. Lysine 125 provides a ligand contact to substrate.

It belongs to the ribose 5-phosphate isomerase family. As to quaternary structure, homodimer.

The enzyme catalyses aldehydo-D-ribose 5-phosphate = D-ribulose 5-phosphate. It participates in carbohydrate degradation; pentose phosphate pathway; D-ribose 5-phosphate from D-ribulose 5-phosphate (non-oxidative stage): step 1/1. Its function is as follows. Catalyzes the reversible conversion of ribose-5-phosphate to ribulose 5-phosphate. The polypeptide is Ribose-5-phosphate isomerase A (Pseudomonas paraeruginosa (strain DSM 24068 / PA7) (Pseudomonas aeruginosa (strain PA7))).